The sequence spans 515 residues: Putative ammonium transporter 2 (515 aa).

12 helical membrane passes run 34-54 (GVWM…FGLL), 72-92 (VFDV…LTFG), 124-144 (GISY…STIV), 156-176 (SHCF…HWVW), 191-211 (AGCS…TLYL), 226-246 (VSDP…WLAF), 266-286 (AVGT…ITRL), 291-311 (IQMD…TGGC), 321-337 (LVGA…YPVT), 346-366 (VGVF…PAIF), 381-401 (FQTS…LLFL), and 404-424 (FVIL…LFLI).

Belongs to the ammonia transporter channel (TC 1.A.11.2) family.

It localises to the membrane. In terms of biological role, involved in the uptake of ammonia. Implicated in aging. The protein is Putative ammonium transporter 2 (amt-2) of Caenorhabditis elegans.